A 220-amino-acid polypeptide reads, in one-letter code: Ribose-5-phosphate isomerase A (220 aa).

Substrate is bound by residues 28–31 (TGST), 81–84 (DGAD), and 94–97 (KGGG). E103 functions as the Proton acceptor in the catalytic mechanism. K121 is a substrate binding site.

The protein belongs to the ribose 5-phosphate isomerase family. As to quaternary structure, homodimer.

The enzyme catalyses aldehydo-D-ribose 5-phosphate = D-ribulose 5-phosphate. Its pathway is carbohydrate degradation; pentose phosphate pathway; D-ribose 5-phosphate from D-ribulose 5-phosphate (non-oxidative stage): step 1/1. Functionally, catalyzes the reversible conversion of ribose-5-phosphate to ribulose 5-phosphate. This is Ribose-5-phosphate isomerase A from Vesicomyosocius okutanii subsp. Calyptogena okutanii (strain HA).